Consider the following 277-residue polypeptide: uncharacterized protein (277 aa).

Disordered regions lie at residues 33 to 168 and 210 to 277; these read KNDN…VTTR and NKLL…PIEF. The span at 34–45 shows a compositional bias: basic and acidic residues; it reads NDNDERTAHEES. Positions 86-99 are enriched in basic residues; it reads LKSKSKRKTKKGGS. 3 stretches are compositionally biased toward basic and acidic residues: residues 100 to 113, 151 to 168, and 216 to 230; these read KPREENVNTEKHIV, AKELSYDELKDKLEVTTR, and TNEDEINKSQRNKEK. Basic residues predominate over residues 231–241; sequence DRKRRERRTAR. Residues 242–258 are compositionally biased toward basic and acidic residues; that stretch reads RKDERKQEKKQEKKQDN. Over residues 259 to 271 the composition is skewed to polar residues; the sequence is KTSQSFPSSTDMN.

It is found in the cytoplasm. This is an uncharacterized protein from Saccharomyces cerevisiae (strain ATCC 204508 / S288c) (Baker's yeast).